Consider the following 248-residue polypeptide: Ubiquinone biosynthesis O-methyltransferase (248 aa).

S-adenosyl-L-methionine contacts are provided by R41, G72, D93, and M136.

This sequence belongs to the methyltransferase superfamily. UbiG/COQ3 family.

The catalysed reaction is a 3-demethylubiquinol + S-adenosyl-L-methionine = a ubiquinol + S-adenosyl-L-homocysteine + H(+). The enzyme catalyses a 3-(all-trans-polyprenyl)benzene-1,2-diol + S-adenosyl-L-methionine = a 2-methoxy-6-(all-trans-polyprenyl)phenol + S-adenosyl-L-homocysteine + H(+). Its pathway is cofactor biosynthesis; ubiquinone biosynthesis. In terms of biological role, O-methyltransferase that catalyzes the 2 O-methylation steps in the ubiquinone biosynthetic pathway. The chain is Ubiquinone biosynthesis O-methyltransferase from Brucella abortus (strain 2308).